A 314-amino-acid chain; its full sequence is Ribosomal RNA small subunit methyltransferase H (314 aa).

S-adenosyl-L-methionine-binding positions include 34–36 (GGH), D53, F82, D103, and Q110.

This sequence belongs to the methyltransferase superfamily. RsmH family.

Its subcellular location is the cytoplasm. The enzyme catalyses cytidine(1402) in 16S rRNA + S-adenosyl-L-methionine = N(4)-methylcytidine(1402) in 16S rRNA + S-adenosyl-L-homocysteine + H(+). Its function is as follows. Specifically methylates the N4 position of cytidine in position 1402 (C1402) of 16S rRNA. This Levilactobacillus brevis (strain ATCC 367 / BCRC 12310 / CIP 105137 / JCM 1170 / LMG 11437 / NCIMB 947 / NCTC 947) (Lactobacillus brevis) protein is Ribosomal RNA small subunit methyltransferase H.